Here is a 757-residue protein sequence, read N- to C-terminus: Maltose phosphorylase (757 aa).

Residue 354–355 participates in substrate binding; it reads WD. The active-site Proton donor is the glutamate 483. 588–589 is a binding site for substrate; that stretch reads KQ.

It belongs to the glycosyl hydrolase 65 family.

It catalyses the reaction D-maltose + phosphate = beta-D-glucose 1-phosphate + D-glucose. Its pathway is glycan degradation; maltose degradation. In terms of biological role, catalyzes the phosphorolysis of maltose, leading to the formation of glucose and glucose 1-P. This is Maltose phosphorylase (mdxK) from Bacillus subtilis (strain 168).